The primary structure comprises 153 residues: RNA-binding protein OPG065 (153 aa).

In terms of domain architecture, Z-binding spans 1-33 (MEKREVNKALYDLQRSAMVYSSNDTPPRWSTTM). Residues 22 to 34 (SNDTPPRWSTTMD) show a composition bias toward polar residues. A disordered region spans residues 22-44 (SNDTPPRWSTTMDADTRPTDSDA). A DRBM domain is found at 80–147 (NPVTVINEYC…AKLAVDKLLS (68 aa)).

Belongs to the orthopoxvirus OPG065 family. Interacts with host G1P2/ISG15. Interacts with host EIF2AK2/PKR. Interacts with host ZBP1.

RNA-binding protein that plays a role in the inhibition of multiple cellular antiviral responses activated by double-stranded RNA (dsRNA), such as inhibition of PKR activation, necroptosis, and IFN-mediated antiviral activities. Recognizes and binds Z-RNA structures via its Z-binding domain and dsRNA via its DRBM domain: RNA-binding activity is required to escape host ZBP1-dependent necroptosis. Mechanistically, the Z-binding domain binds Z-RNAs that are produced during vaccinia virus infection, thereby competing with Z-RNA detection by host ZBP1, suppressing ZBP1-dependent necroptosis. Acts as a key inhibitor of the interferon response by blocking the phosphorylation and subsequent activation of IRF3 and IRF7 kinases that are required for interferon-alpha gene expression. Inhibits NF-kappa-B activation and the ubiquitin-like protein ISG15, which is an early antiviral protein. The binding with host ISG15 subsequently blocks host ISGylation. The polypeptide is RNA-binding protein OPG065 (OPG065) (Monkeypox virus).